Here is a 191-residue protein sequence, read N- to C-terminus: Putative RNA-binding protein EEED8.4 (191 aa).

One can recognise an RRM domain in the interval 55-132 (KSVFIGNVDF…RPIVVTAKRT (78 aa)). A disordered region spans residues 136–160 (GMGHGVRGSSRGTFGRGRGAARGAP).

This is Putative RNA-binding protein EEED8.4 from Caenorhabditis elegans.